The primary structure comprises 313 residues: MEPANDTTVTEFILTGLSQTREVQLVLFVIFLSFYLFILPVNILIICTIRLDSHLSSPMYFLLANLAFLDIWYSSITAPKMLVDFFVERKIISFGGCIAQLFFLHFVGASEMFLLTVMAFDRYAAICRPLHYATIMNRRLCCILVALSWTGGFVHSIIQVALIVRLPFCGPNELDNYFCDITQVVRIACANTFLEEMVMIFSSGLISVVCFIALLMSYAFLLTMLKKHSSSGESTSRAISTCYSHITIVVLMFGPSIYIYARPFDSFSLDKVVSVFHTVIFPLLNPIIYTLRNKEVKAAMRKLVNRYIFCKEK.

Residues 1–25 (MEPANDTTVTEFILTGLSQTREVQL) lie on the Extracellular side of the membrane. Asn5 carries N-linked (GlcNAc...) asparagine glycosylation. The helical transmembrane segment at 26–46 (VLFVIFLSFYLFILPVNILII) threads the bilayer. At 47–57 (CTIRLDSHLSS) the chain is on the cytoplasmic side. The chain crosses the membrane as a helical span at residues 58–78 (PMYFLLANLAFLDIWYSSITA). The Extracellular segment spans residues 79–97 (PKMLVDFFVERKIISFGGC). Cys97 and Cys179 are oxidised to a cystine. The chain crosses the membrane as a helical span at residues 98-118 (IAQLFFLHFVGASEMFLLTVM). Topologically, residues 119-142 (AFDRYAAICRPLHYATIMNRRLCC) are cytoplasmic. Residues 143 to 163 (ILVALSWTGGFVHSIIQVALI) form a helical membrane-spanning segment. The Extracellular portion of the chain corresponds to 164 to 204 (VRLPFCGPNELDNYFCDITQVVRIACANTFLEEMVMIFSSG). Residues 205 to 225 (LISVVCFIALLMSYAFLLTML) traverse the membrane as a helical segment. Topologically, residues 226–238 (KKHSSSGESTSRA) are cytoplasmic. A helical transmembrane segment spans residues 239–259 (ISTCYSHITIVVLMFGPSIYI). Over 260–270 (YARPFDSFSLD) the chain is Extracellular. Residues 271–291 (KVVSVFHTVIFPLLNPIIYTL) traverse the membrane as a helical segment. The Cytoplasmic segment spans residues 292–313 (RNKEVKAAMRKLVNRYIFCKEK).

This sequence belongs to the G-protein coupled receptor 1 family. Highly expressed in liver but not in adipose tissue. Also expressed at high level in testis.

Its subcellular location is the cell membrane. In terms of biological role, olfactory receptor that acts as a receptor of Asprosin hormone at the surface of hepatocytes to promote hepatocyte glucose release. Also binds Asprosin in the arcuate nucleus of the hypothalamus, thereby stimulating appetite by promoting orexigenic AgRP neuronal activity. In testis, Asprosin-binding promotes sperm progressive motility and enhances male fertility. The activity of this receptor is mediated by G proteins which activate adenylyl cyclase, resulting in an elevation of intracellular cAMP. This chain is Olfactory receptor 4M1, found in Mus musculus (Mouse).